We begin with the raw amino-acid sequence, 198 residues long: Transcription antitermination protein NusB (198 aa).

It belongs to the NusB family.

Involved in transcription antitermination. Required for transcription of ribosomal RNA (rRNA) genes. Binds specifically to the boxA antiterminator sequence of the ribosomal RNA (rrn) operons. The polypeptide is Transcription antitermination protein NusB (Methylococcus capsulatus (strain ATCC 33009 / NCIMB 11132 / Bath)).